The sequence spans 1356 residues: Kinesin-like protein KIF24 (1356 aa).

The region spanning 1–64 is the SAM domain; sequence MASWLYECLC…FQLIKIIKIM (64 aa). Residues 93 to 119 are disordered; the sequence is GPRRQLHFDSPSASKDKMANNETGSLS. Position 102 is a phosphoserine (serine 102). In terms of domain architecture, Kinesin motor spans 218–541; sequence KIRVCVRKRP…LRYADRVKEL (324 aa). Residue 308–315 coordinates ATP; that stretch reads GQTGAGKT. Phosphoserine is present on serine 473. The interval 473–702 is interaction with MPHOSPH9; the sequence is SLLALKECIR…PTRGKKVQPV (230 aa). The segment covering 552-571 has biased composition (polar residues); it reads TSQNQTSANASPKRIQSSPV. Disordered stretches follow at residues 552–581, 597–664, 788–840, 897–947, and 964–998; these read TSQN…CSPK, PTKV…LCSE, EGRL…STAL, RGAL…HQKP, and VPEQ…DQRD. Residue serine 579 is modified to Phosphoserine. Threonine 615 bears the Phosphothreonine; by NEK2 mark. Phosphoserine; by NEK2 is present on serine 616. Serine 640, serine 817, and serine 820 each carry phosphoserine. A compositionally biased stretch (basic residues) spans 640–653; the sequence is SPRKGTTRSGHSIK. The span at 810–821 shows a compositional bias: acidic residues; that stretch reads QAEDLDDSDFSE. Positions 830-840 are enriched in polar residues; it reads QPAMKQGSTAL. The span at 970 to 979 shows a compositional bias: polar residues; it reads GSLSSPSPEN. At serine 1008 the chain carries Phosphoserine. Residues 1109–1140 are disordered; sequence LSSSPPDNRPSGDLPALSPSPIHQHSPDKLPG.

This sequence belongs to the TRAFAC class myosin-kinesin ATPase superfamily. Kinesin family. In terms of assembly, interacts with CCP110, CEP97, TALPID3. Interacts with MPHOSPH9. In terms of tissue distribution, expressed in brain, spinal cord, and small intestine.

It localises to the cytoplasm. It is found in the cytoskeleton. The protein localises to the microtubule organizing center. Its subcellular location is the centrosome. The protein resides in the centriole. Functionally, microtubule-dependent motor protein that acts as a negative regulator of ciliogenesis by mediating recruitment of CCP110 to mother centriole in cycling cells, leading to restrict nucleation of cilia at centrioles. Mediates depolymerization of microtubules of centriolar origin, possibly to suppress aberrant cilia formation. Following activation by NEK2 involved in disassembly of primary cilium during G2/M phase but does not disassemble fully formed ciliary axonemes. As cilium assembly and disassembly is proposed to coexist in a dynamic equilibrium may suppress nascent cilium assembly and, potentially, ciliar re-assembly in cells that have already disassembled their cilia ensuring the completion of cilium removal in the later stages of the cell cycle. Plays an important role in recruiting MPHOSPH9, a negative regulator of cilia formation to the distal end of mother centriole. This Mus musculus (Mouse) protein is Kinesin-like protein KIF24 (Kif24).